Here is a 217-residue protein sequence, read N- to C-terminus: TPA-induced transmembrane protein (217 aa).

Residues 1-37 (MDLAQPSQPVDELELSVLERQPEENTPLNGADKVFPS) are disordered. A helical membrane pass occupies residues 66 to 86 (LWMIITSIFLGVITVIIIGLC).

Interacts with LIPH. Detected predominantly in the skin, with strongest expression in the inner root sheath of the hair follicle.

The protein resides in the endoplasmic reticulum. Its subcellular location is the cell membrane. Its function is as follows. Has a role in LIPH-mediated synthesis of 2-acyl lysophosphatidic acid (LPA). LPA is a bioactive lipid mediator involved in different biological processes, and necessary to promote hair formation and growth. In Homo sapiens (Human), this protein is TPA-induced transmembrane protein (TTMP).